Consider the following 609-residue polypeptide: Glutamine--fructose-6-phosphate aminotransferase [isomerizing] (609 aa).

Residue Cys2 is the Nucleophile; for GATase activity of the active site. Residues 2–219 (CGIFGYLGNQ…SGEFAIVSQG (218 aa)) form the Glutamine amidotransferase type-2 domain. 2 consecutive SIS domains span residues 285–426 (LSDV…VHGA) and 458–599 (WAQP…IDCP). The For Fru-6P isomerization activity role is filled by Lys604.

In terms of assembly, homodimer.

Its subcellular location is the cytoplasm. The catalysed reaction is D-fructose 6-phosphate + L-glutamine = D-glucosamine 6-phosphate + L-glutamate. Catalyzes the first step in hexosamine metabolism, converting fructose-6P into glucosamine-6P using glutamine as a nitrogen source. This chain is Glutamine--fructose-6-phosphate aminotransferase [isomerizing], found in Chlamydia pneumoniae (Chlamydophila pneumoniae).